The primary structure comprises 385 residues: Cytochrome b (385 aa).

Residues 1–27 (MAFRKSNVYLSLVNSYIIDSPQPSSIN) are Mitochondrial matrix-facing. Position 16 (Y16) interacts with a ubiquinone. A helical membrane pass occupies residues 28–51 (YWWNMGSLLGLCLVIQIVTGIFMA). The Mitochondrial intermembrane portion of the chain corresponds to 52–74 (MHYSSNIELAFSSVEHIMRDVHN). A helical membrane pass occupies residues 75–102 (GYILRYLHANGASFFFMVMFMHMAKGLY). H82 and H96 together coordinate heme b. Over 103 to 110 (YGSYRSPR) the chain is Mitochondrial matrix. The helical transmembrane segment at 111–135 (VTLWNVGVIIFILTIATAFLGYCCV) threads the bilayer. At 136 to 172 (YGQMSHWGATVITNLFSAIPFVGNDIVSWLWGGFSVS) the chain is on the mitochondrial intermembrane side. A helical membrane pass occupies residues 173 to 204 (NPTIQRFFALHYLVPFIIAAMVIMHLMALHIH). Residues H183 and H197 each coordinate heme b. Residue H202 coordinates a ubiquinone. The Mitochondrial matrix segment spans residues 205 to 223 (GSSNPLGITGNLDRIPMHS). A helical membrane pass occupies residues 224 to 246 (YFIFKDLVTVFLFMLILALFVFY). At 247 to 287 (SPNTLGHPDNYIPGNPLVTPASIVPEWYLLPFYAILRSIPD) the chain is on the mitochondrial intermembrane side. Residues 288-308 (KLLGVITMFAAILVLLVLPFT) form a helical membrane-spanning segment. The Mitochondrial matrix segment spans residues 309–319 (DRSVVRGNTFK). The helical transmembrane segment at 320-340 (VLSKFFFFIFVFNFVLLGQIG) threads the bilayer. At 341-347 (ACHVEVP) the chain is on the mitochondrial intermembrane side. The helical transmembrane segment at 348 to 364 (YVLMGQIATFIYFAYFL) threads the bilayer. The Mitochondrial matrix segment spans residues 365 to 385 (IIVPVISTIENVLFYIGRVNK).

Belongs to the cytochrome b family. Component of the ubiquinol-cytochrome c oxidoreductase (cytochrome b-c1 complex, complex III, CIII), a multisubunit enzyme composed of 10 subunits. The complex is composed of 3 respiratory subunits cytochrome b (COB), cytochrome c1 (CYT1) and Rieske protein (RIP1), 2 core protein subunits COR1 and QCR2, and 5 low-molecular weight protein subunits QCR6, QCR7, QCR8, QCR9 and QCR10. The complex exists as an obligatory dimer and forms supercomplexes (SCs) in the inner mitochondrial membrane with a monomer or a dimer of cytochrome c oxidase (complex IV, CIV), resulting in 2 different assemblies (supercomplexes III(2)IV and III(2)IV(2)). Heme b serves as cofactor.

It localises to the mitochondrion inner membrane. It catalyses the reaction a quinol + 2 Fe(III)-[cytochrome c](out) = a quinone + 2 Fe(II)-[cytochrome c](out) + 2 H(+)(out). Functionally, component of the ubiquinol-cytochrome c oxidoreductase, a multisubunit transmembrane complex that is part of the mitochondrial electron transport chain which drives oxidative phosphorylation. The respiratory chain contains 3 multisubunit complexes succinate dehydrogenase (complex II, CII), ubiquinol-cytochrome c oxidoreductase (cytochrome b-c1 complex, complex III, CIII) and cytochrome c oxidase (complex IV, CIV), that cooperate to transfer electrons derived from NADH and succinate to molecular oxygen, creating an electrochemical gradient over the inner membrane that drives transmembrane transport and the ATP synthase. The cytochrome b-c1 complex catalyzes electron transfer from ubiquinol to cytochrome c, linking this redox reaction to translocation of protons across the mitochondrial inner membrane, with protons being carried across the membrane as hydrogens on the quinol. In the process called Q cycle, 2 protons are consumed from the matrix, 4 protons are released into the intermembrane space and 2 electrons are passed to cytochrome c. Cytochrome b is a catalytic core subunit containing 2 b-type hemes BL and BH topographically segregated in the quinone reduction (Qi) and quinol oxidation (Q0) sites on opposite sides of the membrane. This Saccharomyces cerevisiae (strain ATCC 204508 / S288c) (Baker's yeast) protein is Cytochrome b (COB).